The primary structure comprises 403 residues: G2/mitotic-specific cyclin-B1 (403 aa).

The protein belongs to the cyclin family. Cyclin AB subfamily. As to quaternary structure, interacts with the CDC2 protein kinase to form a serine/threonine kinase holoenzyme complex also known as maturation promoting factor (MPF). The cyclin subunit imparts substrate specificity to the complex.

Its function is as follows. Essential for the control of the cell cycle at the G2/M (mitosis) transition. The sequence is that of G2/mitotic-specific cyclin-B1 (ccnb1) from Anguilla japonica (Japanese eel).